Consider the following 284-residue polypeptide: N-acylphosphatidylethanolamine synthase (284 aa).

A helical transmembrane segment spans residues 21 to 37 (TVIMAVSAFAKAVANLC). The HXXXXD motif motif lies at 67-72 (HMSTLD). Residues 122-163 (GGGIYQENMNEALQRLKDGSWLHTFPEGKVFQDDVPIRRLKW) form a hydrophilic region.

The protein belongs to the taffazin family. As to expression, essentially present in young tissues. Expressed in roots, cotyledons, leaves, and shoot and root apical meristems.

The protein resides in the cell membrane. In terms of biological role, acyltransferase that catalyzes the N-acylation of phosphatidylethanolamine to form N-acylphosphatidylethanolamine (N-acyl-PE) (e.g. NAPEs containing C16:0, C16:1, C18:0, and C18:1). Also mediates the formation of acylphosphatidylglycerol (acyl-PG) from lysoglycerophospholipid by O-acylation. Uses acyl-CoA as acyl donors. Acylates 1-acyllysophosphatidylethanolamine (1-acyllyso-PE) and 1-acyllysophosphatidylglycerol (1-acyllyso-PG) at the sn-2-position. This Arabidopsis thaliana (Mouse-ear cress) protein is N-acylphosphatidylethanolamine synthase.